The primary structure comprises 187 residues: UPF0398 protein MW1336 (187 aa).

This sequence belongs to the UPF0398 family.

The polypeptide is UPF0398 protein MW1336 (Staphylococcus aureus (strain MW2)).